Here is a 337-residue protein sequence, read N- to C-terminus: Monoacylglycerol lipase ABHD6 (337 aa).

The Extracellular segment spans residues 1-8 (MDLDVVNM). A helical; Signal-anchor for type II membrane protein transmembrane segment spans residues 9–29 (FVIAGGTLAIPILAFVASFLL). Topologically, residues 30–337 (WPSALIRIYY…HNPDNNKKLN (308 aa)) are cytoplasmic. The active-site Nucleophile is Ser148. Active-site charge relay system residues include Asp278 and His306.

It belongs to the AB hydrolase superfamily.

The protein resides in the late endosome membrane. Its subcellular location is the lysosome membrane. It is found in the mitochondrion membrane. It carries out the reaction Hydrolyzes glycerol monoesters of long-chain fatty acids.. The catalysed reaction is 1-octanoylglycerol + H2O = octanoate + glycerol + H(+). The enzyme catalyses 1-decanoylglycerol + H2O = decanoate + glycerol + H(+). It catalyses the reaction 1-dodecanoylglycerol + H2O = dodecanoate + glycerol + H(+). It carries out the reaction 1-tetradecanoylglycerol + H2O = tetradecanoate + glycerol + H(+). The catalysed reaction is 2-hexadecanoylglycerol + H2O = glycerol + hexadecanoate + H(+). The enzyme catalyses 2-(9Z-octadecenoyl)-glycerol + H2O = glycerol + (9Z)-octadecenoate + H(+). It catalyses the reaction 1-(9Z-octadecenoyl)-glycerol + H2O = glycerol + (9Z)-octadecenoate + H(+). It carries out the reaction 2-(9Z,12Z-octadecadienoyl)-glycerol + H2O = (9Z,12Z)-octadecadienoate + glycerol + H(+). The catalysed reaction is 2-(5Z,8Z,11Z,14Z-eicosatetraenoyl)-glycerol + H2O = glycerol + (5Z,8Z,11Z,14Z)-eicosatetraenoate + H(+). The enzyme catalyses 1-(5Z,8Z,11Z,14Z-eicosatetraenoyl)-glycerol + H2O = glycerol + (5Z,8Z,11Z,14Z)-eicosatetraenoate + H(+). It catalyses the reaction 1-(9Z,12Z-octadecadienoyl)-glycerol + H2O = (9Z,12Z)-octadecadienoate + glycerol + H(+). It carries out the reaction 3-(9Z-octadecenoyl)-sn-glycero-1-phospho-(3'-(9Z-octadecenoyl)-1'-sn-glycerol) + H2O = 3-(9Z-octadecenoyl)-sn-glycero-1-phospho-(1'-sn-glycerol) + (9Z)-octadecenoate + H(+). The catalysed reaction is (S,S)-2-(9Z-octadecenoyl)-sn-glycero-1-phospho-(2'-(9Z-octadecenoyl)-1'-sn-glycerol) + H2O = (S,S)-2-(9Z-octadecenoyl)-sn-glycero-1-phospho-(1'-sn-glycerol) + (9Z)-octadecenoate + H(+). The enzyme catalyses (R,R)-2-(9Z-octadecenoyl)-sn-glycero-3-phospho-(2'-(9Z-octadecenoyl)-3'-sn-glycerol) + H2O = (R,R)-2-(9Z-octadecenoyl)-sn-glycero-3-phospho-(3'-sn-glycerol) + (9Z)-octadecenoate + H(+). Functionally, lipase that preferentially hydrolysis medium-chain saturated monoacylglycerols including 2-arachidonoylglycerol. Through 2-arachidonoylglycerol degradation may regulate endocannabinoid signaling pathways. Also has a lysophosphatidyl lipase activity with a preference for lysophosphatidylglycerol among other lysophospholipids. Also able to degrade bis(monoacylglycero)phosphate (BMP) and constitutes the major enzyme for BMP catabolism. BMP, also known as lysobisphosphatidic acid, is enriched in late endosomes and lysosomes and plays a key role in the formation of intraluminal vesicles and in lipid sorting. This is Monoacylglycerol lipase ABHD6 from Rattus norvegicus (Rat).